The following is an 818-amino-acid chain: MIMDNFDSPFLYNRPEITVDSLKKSIVYKLIFSIGRSPKEASQRDWLNATLYAVRDFVTEGWITTARQSRSEETRRVYYLSMEFLIGRTLSNAMLAEGVYDVAKQALSELNVNLEDVLEKEVDPGLGNGGLGRLAACFMDSIATLALPGVGYGIRYEYGMFKQEIEDGHQVEKPDAWLDKGAAWEFIRPSKRHTVRFGGGIHFEGKKCIWTSKEEVEALAYDQMIPGYANDSAATLRLWSAYAGDRFDLADFNKGDYFAAVQDRTLSKNISRVLYPDDSTWSGRELRLRQEYFLVSASLQDIIYRHKRIHNTMENFADKVAIHLNDTHPALAIPELMVILIDQEGYEWKKAWDITRRVFSYTCHTLMSEALETWPVEMMAHILPRHLQMIFEINDYFLEYVRTYVSTDAEFIRRVSLIEEGDHRKVRMGWLSVVGSNKVNGVAAIHSELMVTSTFADFARIYPERFTNVTNGITPRRWIGVANPELSALFDRYIGKEWRRDLSQLTLLKDKVQDPELKKSIAQIKYNNKVKLANYIKNELGVEVDPNALFDVQVKRIHEYKRQILNVLHIIARYNAMLENPEKDWVPRVFILAGKAASAYYAAKQTINLINDVANIINHDERLQGRLKVVFIPNYSVSLAELIIPAADISEQISLAGTEASGTSNMKFALNGALTIGTLDGANVEILDNVGQDHIFIFGNTVEQVESLRRHGYRPFDYYQNDEELRKVVDQIISGRFSPTDANRYHQLLQSLQYHDYYQAFADFRSYVDMQQNVDAKYQDQNAWIDSTLQNIVNMSYFSSDRTILEYAEKIWKIKPVK.

Lysine 667 bears the N6-(pyridoxal phosphate)lysine mark.

The protein belongs to the glycogen phosphorylase family. Requires pyridoxal 5'-phosphate as cofactor.

The catalysed reaction is [(1-&gt;4)-alpha-D-glucosyl](n) + phosphate = [(1-&gt;4)-alpha-D-glucosyl](n-1) + alpha-D-glucose 1-phosphate. In terms of biological role, phosphorylase is an important allosteric enzyme in carbohydrate metabolism. Enzymes from different sources differ in their regulatory mechanisms and in their natural substrates. However, all known phosphorylases share catalytic and structural properties. The protein is Glycogen phosphorylase (glgP) of Pasteurella multocida (strain Pm70).